The sequence spans 475 residues: Aspartyl/glutamyl-tRNA(Asn/Gln) amidotransferase subunit B (475 aa).

The protein belongs to the GatB/GatE family. GatB subfamily. As to quaternary structure, heterotrimer of A, B and C subunits.

It catalyses the reaction L-glutamyl-tRNA(Gln) + L-glutamine + ATP + H2O = L-glutaminyl-tRNA(Gln) + L-glutamate + ADP + phosphate + H(+). The enzyme catalyses L-aspartyl-tRNA(Asn) + L-glutamine + ATP + H2O = L-asparaginyl-tRNA(Asn) + L-glutamate + ADP + phosphate + 2 H(+). In terms of biological role, allows the formation of correctly charged Asn-tRNA(Asn) or Gln-tRNA(Gln) through the transamidation of misacylated Asp-tRNA(Asn) or Glu-tRNA(Gln) in organisms which lack either or both of asparaginyl-tRNA or glutaminyl-tRNA synthetases. The reaction takes place in the presence of glutamine and ATP through an activated phospho-Asp-tRNA(Asn) or phospho-Glu-tRNA(Gln). The sequence is that of Aspartyl/glutamyl-tRNA(Asn/Gln) amidotransferase subunit B from Staphylococcus epidermidis (strain ATCC 12228 / FDA PCI 1200).